A 1496-amino-acid polypeptide reads, in one-letter code: Rap guanine nucleotide exchange factor 2 (1496 aa).

Disordered stretches follow at residues 40–59 and 68–101; these read HVSSSHSGCSITSDSGSSSL and SEAGDMDLSGLPETAVDSEDDDDEEDIERASDPL. Acidic residues predominate over residues 83 to 94; the sequence is VDSEDDDDEEDI. An a nucleoside 3',5'-cyclic phosphate-binding site is contributed by 135 to 254; sequence AFANMTMSVR…VEEEGEIVMV (120 aa). The 114-residue stretch at 267–380 folds into the N-terminal Ras-GEF domain; that stretch reads KGHIVIKGTS…RLLNIACAAK (114 aa). A PDZ domain is found at 385–470; the sequence is LMTLTKPSRE…ITVKTNLFVF (86 aa). Serine 501 bears the Phosphoserine mark. In terms of domain architecture, Ras-associating spans 606 to 692; sequence PDQVLRVFKA…GRYYLKNNME (87 aa). Position 644 is a phosphothreonine; by PLK2 (threonine 644). The region spanning 717-944 is the Ras-GEF domain; it reads STVEVATQLS…SQGSANATVL (228 aa). Serine 806 carries the post-translational modification Phosphoserine; by PLK2. Position 930 is a phosphoserine (serine 930). 2 positions are modified to phosphoserine; by PLK2: serine 933 and serine 1022. The disordered stretch occupies residues 1002–1051; that stretch reads PATSTLPKNPGDKKPVKSETSPVAPRAGPQQKVQPQQPLAQPQPPHKVSQ. Low complexity predominate over residues 1030–1041; sequence PQQKVQPQQPLA. Residues serine 1079, serine 1088, serine 1094, serine 1115, serine 1119, and serine 1158 each carry the phosphoserine modification. The tract at residues 1093-1159 is disordered; that stretch reads GSLERHRKQA…RSSIVSNSSF (67 aa). 2 stretches are compositionally biased toward low complexity: residues 1110–1124 and 1140–1159; these read SSQLSSPPTSPQSSP and SDSGHSEISSRSSIVSNSSF. The residue at position 1175 (serine 1175) is a Phosphoserine; by PLK2. Disordered regions lie at residues 1224-1256, 1303-1369, and 1390-1496; these read STEELSHDQGDRASLDAADSGRGSWTSCSSGSH, STKY…EEAK, and RKEG…VSAV. Over residues 1227-1237 the composition is skewed to basic and acidic residues; the sequence is ELSHDQGDRAS. Polar residues-rich tracts occupy residues 1246-1256 and 1306-1330; these read GSWTSCSSGSH and YNRQNQSRESLEQAQSRASWASSTG. Low complexity predominate over residues 1440 to 1455; sequence PTEAPAPGQTPPAAAA. The segment covering 1485–1496 has biased composition (acidic residues); that stretch reads AEEDEDEQVSAV.

The protein belongs to the RAPGEF2 family. Found in a complex, at least composed of KIDINS220, MAGI2, NTRK1 and RAPGEF2; the complex is mainly formed at late endosomes in a neuronal growth factor (NGF)-dependent manner. Interacts (via C-terminal domain) with NEDD4 (via WW domains); this interaction leads to ubiquitination and degradation via the proteasome pathway in a cAMP-independent manner. Interacts with MAGI1 (via PDZ domain). Interacts with ADRB1 (via C-terminal PDZ motif); the interaction is direct. Interacts (via Ras-associating domain) with RAP1A (via GTP-bound active form). Interacts weakly with HRAS (via GDP- and GTP-bound forms). Interacts (via C-terminal domain) with MAGI2 (via PDZ and WW domains). Interacts with CDH1, CTNNB1 and TJP1. In terms of processing, ubiquitinated by NEDD4, leading to proteasomal degradation. Phosphorylation by PLK2 promotes its activity. As to expression, expressed in all layers of the cerebral cortex, hippocampus and cerebellum. Expressed in the cortical plate, cingulate cortex and the subventricular zone. Expressed in neurons and endocrine cells (at protein level). Expressed in melanoma cells.

It localises to the cytoplasm. The protein localises to the perinuclear region. Its subcellular location is the cell membrane. It is found in the late endosome. The protein resides in the cell junction. Functions as a guanine nucleotide exchange factor (GEF), which activates Rap and Ras family of small GTPases by exchanging bound GDP for free GTP in a cAMP-dependent manner. Serves as a link between cell surface receptors and Rap/Ras GTPases in intracellular signaling cascades. Also acts as an effector for Rap1 by direct association with Rap1-GTP thereby leading to the amplification of Rap1-mediated signaling. Shows weak activity on HRAS. It is controversial whether RAPGEF2 binds cAMP and cGMP or not. Its binding to ligand-activated beta-1 adrenergic receptor ADRB1 leads to the Ras activation through the G(s)-alpha signaling pathway. Involved in the cAMP-induced Ras and Erk1/2 signaling pathway that leads to sustained inhibition of long term melanogenesis by reducing dendrite extension and melanin synthesis. Also provides inhibitory signals for cell proliferation of melanoma cells and promotes their apoptosis in a cAMP-independent nanner. Regulates cAMP-induced neuritogenesis by mediating the Rap1/B-Raf/ERK signaling through a pathway that is independent on both PKA and RAPGEF3/RAPGEF4. Involved in neuron migration and in the formation of the major forebrain fiber connections forming the corpus callosum, the anterior commissure and the hippocampal commissure during brain development. Involved in neuronal growth factor (NGF)-induced sustained activation of Rap1 at late endosomes and in brain-derived neurotrophic factor (BDNF)-induced axon outgrowth of hippocampal neurons. Plays a role in the regulation of embryonic blood vessel formation and in the establishment of basal junction integrity and endothelial barrier function. May be involved in the regulation of the vascular endothelial growth factor receptor KDR and cadherin CDH5 expression at allantois endothelial cell-cell junctions. This Mus musculus (Mouse) protein is Rap guanine nucleotide exchange factor 2 (Rapgef2).